The primary structure comprises 200 residues: Pyrrolidone-carboxylate peptidase (200 aa).

Active-site residues include E78, C141, and H165.

It belongs to the peptidase C15 family. Homotetramer.

It localises to the cytoplasm. It carries out the reaction Release of an N-terminal pyroglutamyl group from a polypeptide, the second amino acid generally not being Pro.. Its function is as follows. Removes 5-oxoproline from various penultimate amino acid residues except L-proline. The protein is Pyrrolidone-carboxylate peptidase of Thermococcus onnurineus (strain NA1).